Here is a 512-residue protein sequence, read N- to C-terminus: Protein SHC1 (512 aa).

Over residues 101-113 (EQDEFENDVEDDA) the composition is skewed to acidic residues. Disordered regions lie at residues 101 to 122 (EQDE…EKSQ) and 144 to 164 (DGNS…ESVA). Sel1-like repeat units lie at residues 318 to 353 (PDAQ…KRMH), 354 to 389 (IESV…TKNH), 390 to 429 (PAAM…SMAS), and 433 to 470 (CGAP…ALGH).

The protein belongs to the SKT5 family.

The protein resides in the cytoplasm. It is found in the cytoplasmic granule membrane. Required for the activation of chitin synthase III (CHS3) activity during the sporulation process. This chain is Protein SHC1 (SHC1), found in Saccharomyces cerevisiae (strain ATCC 204508 / S288c) (Baker's yeast).